The following is a 543-amino-acid chain: Chaperonin GroEL 7 (543 aa).

Residues 30 to 33 (TLGP), Lys51, 87 to 91 (DGTTT), Gly415, and Asp496 each bind ATP.

Belongs to the chaperonin (HSP60) family. As to quaternary structure, forms a cylinder of 14 subunits composed of two heptameric rings stacked back-to-back. Interacts with the co-chaperonin GroES.

It is found in the cytoplasm. It catalyses the reaction ATP + H2O + a folded polypeptide = ADP + phosphate + an unfolded polypeptide.. In terms of biological role, together with its co-chaperonin GroES, plays an essential role in assisting protein folding. The GroEL-GroES system forms a nano-cage that allows encapsulation of the non-native substrate proteins and provides a physical environment optimized to promote and accelerate protein folding. The chain is Chaperonin GroEL 7 from Bradyrhizobium diazoefficiens (strain JCM 10833 / BCRC 13528 / IAM 13628 / NBRC 14792 / USDA 110).